The sequence spans 76 residues: Small ribosomal subunit protein bS16 (76 aa).

This sequence belongs to the bacterial ribosomal protein bS16 family.

The sequence is that of Small ribosomal subunit protein bS16 from Sulfurovum sp. (strain NBC37-1).